A 1922-amino-acid polypeptide reads, in one-letter code: MKSPALQPLSMAGLQLMTPASSPMGPFFGLPWQQEAIHDNIYTPRKYQVELLEAALDHNTIVCLNTGSGKTFIAVLLTKELSYQIRGDFSRNGKRTVFLVNSANQVAQQVSAVRTHSDLKVGEYSNLEVNASWTKERWNQEFTKHQVLIMTCYVALNVLKNGYLSLSDINLLVFDECHLAILDHPYREIMKLCENCPSCPRILGLTASILNGKCDPEELEEKIQKLEKILKSNAETATDLVVLDRYTSQPCEIVVDCGPFTDRSGLYERLLMELEEALNFINDCNISVHSKERDSTLISKQILSDCRAVLVVLGPWCADKVAGMMVRELQKYIKHEQEELHRKFLLFTDTFLRKIHALCEEHFSPASLDLKFVTPKVIKLLEILRKYKPYERQQFESVEWYNNRNQDNYVSWSDSEDDDEDEEIEEKEKPETNFPSPFTNILCGIIFVERRYTAVVLNRLIKEAGKQDPELAYISSNFITGHGIGKNQPRNKQMEAEFRKQEEVLRKFRAHETNLLIATSIVEEGVDIPKCNLVVRFDLPTEYRSYVQSKGRARAPISNYIMLADTDKIKSFEEDLKTYKAIEKILRNKCSKSVDTGETDIDPVMDDDDVFPPYVLRPDDGGPRVTINTAIGHINRYCARLPSDPFTHLAPKCRTRELPDGTFYSTLYLPINSPLRASIVGPPMSCVRLAERVVALICCEKLHKIGELDDHLMPVGKETVKYEEELDLHDEEETSVPGRPGSTKRRQCYPKAIPECLRDSYPRPDQPCYLYVIGMVLTTPLPDELNFRRRKLYPPEDTTRCFGILTAKPIPQIPHFPVYTRSGEVTISIELKKSGFMLSLQMLELITRLHQYIFSHILRLEKPALEFKPTDADSAYCVLPLNVVNDSSTLDIDFKFMEDIEKSEARIGIPSTKYTKETPFVFKLEDYQDAVIIPRYRNFDQPHRFYVADVYTDLTPLSKFPSPEYETFAEYYKTKYNLDLTNLNQPLLDVDHTSSRLNLLTPRHLNQKGKALPLSSAEKRKAKWESLQNKQILVPELCAIHPIPASLWRKAVCLPSILYRLHCLLTAEELRAQTASDAGVGVRSLPADFRYPNLDFGWKKSIDSKSFISISNSSSAENDNYCKHSTIVPENAAHQGANRTSSLENHDQMSVNCRTLLSESPGKLHVEVSADLTAINGLSYNQNLANGSYDLANRDFCQGNQLNYYKQEIPVQPTTSYSIQNLYSYENQPQPSDECTLLSNKYLDGNANKSTSDGSPVMAVMPGTTDTIQVLKGRMDSEQSPSIGYSSRTLGPNPGLILQALTLSNASDGFNLERLEMLGDSFLKHAITTYLFCTYPDAHEGRLSYMRSKKVSNCNLYRLGKKKGLPSRMVVSIFDPPVNWLPPGYVVNQDKSNTDKWEKDEMTKDCMLANGKLDEDYEEEDEEEESLMWRAPKEEADYEDDFLEYDQEHIRFIDNMLMGSGAFVKKISLSPFSTTDSAYEWKMPKKSSLGSMPFSSDFEDFDYSSWDAMCYLDPSKAVEEDDFVVGFWNPSEENCGVDTGKQSISYDLHTEQCIADKSIADCVEALLGCYLTSCGERAAQLFLCSLGLKVLPVIKRTDREKALCPTRENFNSQQKNLSVSCAAASVASSRSSVLKDSEYGCLKIPPRCMFDHPDADKTLNHLISGFENFEKKINYRFKNKAYLLQAFTHASYHYNTITDCYQRLEFLGDAILDYLITKHLYEDPRQHSPGVLTDLRSALVNNTIFASLAVKYDYHKYFKAVSPELFHVIDDFVQFQLEKNEMQGMDSELRRSEEDEEKEEDIEVPKAMGDIFESLAGAIYMDSGMSLETVWQVYYPMMRPLIEKFSANVPRSPVRELLEMEPETAKFSPAERTYDGKVRVTVEVVGKGKFKGVGRSYRIAKSAAARRALRSLKANQPQVPNS.

Residues 51–227 enclose the Helicase ATP-binding domain; it reads LLEAALDHNT…ELEEKIQKLE (177 aa). 64-71 contributes to the ATP binding site; the sequence is LNTGSGKT. A DECH box motif is present at residues 175–178; that stretch reads DECH. A required for interaction with PRKRA and TARBP2 region spans residues 256–595; sequence DCGPFTDRSG…LRNKCSKSVD (340 aa). Residues 409 to 433 form a disordered region; that stretch reads YVSWSDSEDDDEDEEIEEKEKPETN. 2 positions are modified to phosphoserine: Ser413 and Ser415. Acidic residues predominate over residues 414-425; the sequence is DSEDDDEDEEIE. The region spanning 433–602 is the Helicase C-terminal domain; the sequence is NFPSPFTNIL…SVDTGETDID (170 aa). One can recognise a Dicer dsRNA-binding fold domain in the interval 630–722; it reads AIGHINRYCA…MPVGKETVKY (93 aa). Residues 895–1042 enclose the PAZ domain; it reads KFMEDIEKSE…LVPELCAIHP (148 aa). A phosphoserine mark is found at Ser1016 and Ser1160. In terms of domain architecture, RNase III 1 spans 1276-1403; sequence DSEQSPSIGY…TDKWEKDEMT (128 aa). The Mg(2+) site is built by Glu1316, Asp1395, and Glu1398. Phosphoserine is present on residues Ser1460, Ser1468, and Ser1470. In terms of domain architecture, RNase III 2 spans 1666-1824; that stretch reads FENFEKKINY…LAGAIYMDSG (159 aa). Mg(2+) is bound by residues Glu1705, Asp1810, and Glu1813. One can recognise a DRBM domain in the interval 1849–1914; the sequence is VPRSPVRELL…ARRALRSLKA (66 aa). At Ser1868 the chain carries Phosphoserine.

Belongs to the helicase family. Dicer subfamily. As to quaternary structure, component of the RISC loading complex (RLC), or micro-RNA (miRNA) loading complex (miRLC), which is composed of DICER1, AGO2 and TARBP2; DICER1 and TARBP2 are required to process precursor miRNAs (pre-miRNAs) to mature miRNAs and then load them onto AGO2. Note that the trimeric RLC/miRLC is also referred to as RISC. Interacts with DHX9, AGO1, PIWIL1 and PRKRA. Associates with the 60S ribosome. Interacts with BCDIN3D. Interacts with AGO2, TARBP2, EIF6, MOV10 and RPL7A (60S ribosome subunit); they form a large RNA-induced silencing complex (RISC). Interacts (via Dicer dsRNA-binding fold domain) with ALOX5 (via PLAT domain); this interaction enhances arachidonate 5-lipoxygenase activity and modifies the miRNA precursor processing activity of DICER1. (Microbial infection) Interacts with ebolavirus transcriptional activator VP30; this interaction prevents TARBP2/TRBP binding to DICER1 and thus allows the virus to counteract host RNA silencing. In terms of assembly, (Microbial infection) Interacts with ebolavirus transcriptional activator VP35; this interaction prevents TARBP2/TRBP binding to DICER1 and thus allows the virus to counteract host RNA silencing. Mg(2+) is required as a cofactor. Requires Mn(2+) as cofactor.

The protein localises to the cytoplasm. It is found in the perinuclear region. It catalyses the reaction Endonucleolytic cleavage to 5'-phosphomonoester.. In terms of biological role, double-stranded RNA (dsRNA) endoribonuclease playing a central role in short dsRNA-mediated post-transcriptional gene silencing. Cleaves naturally occurring long dsRNAs and short hairpin pre-microRNAs (miRNA) into fragments of twenty-one to twenty-three nucleotides with 3' overhang of two nucleotides, producing respectively short interfering RNAs (siRNA) and mature microRNAs. SiRNAs and miRNAs serve as guide to direct the RNA-induced silencing complex (RISC) to complementary RNAs to degrade them or prevent their translation. Gene silencing mediated by siRNAs, also called RNA interference, controls the elimination of transcripts from mobile and repetitive DNA elements of the genome but also the degradation of exogenous RNA of viral origin for instance. The miRNA pathway on the other side is a mean to specifically regulate the expression of target genes. This chain is Endoribonuclease Dicer (DICER1), found in Homo sapiens (Human).